A 96-amino-acid polypeptide reads, in one-letter code: Co-chaperonin GroES (96 aa).

This sequence belongs to the GroES chaperonin family. Heptamer of 7 subunits arranged in a ring. Interacts with the chaperonin GroEL.

The protein localises to the cytoplasm. Its function is as follows. Together with the chaperonin GroEL, plays an essential role in assisting protein folding. The GroEL-GroES system forms a nano-cage that allows encapsulation of the non-native substrate proteins and provides a physical environment optimized to promote and accelerate protein folding. GroES binds to the apical surface of the GroEL ring, thereby capping the opening of the GroEL channel. The chain is Co-chaperonin GroES from Actinobacillus pleuropneumoniae serotype 7 (strain AP76).